A 341-amino-acid polypeptide reads, in one-letter code: HMG box-containing protein C10F6.08c (341 aa).

Residues S68–Q77 show a composition bias toward basic and acidic residues. 2 disordered regions span residues S68–K195 and L236–A341. Composition is skewed to polar residues over residues D116–Q157 and N165–L177. Residues K178–K195 show a composition bias toward low complexity. A DNA-binding region (HMG box) is located at residues K195 to S263. 2 stretches are compositionally biased toward basic and acidic residues: residues E238–R256 and K269–E304. A phosphothreonine mark is found at T314 and T315. S316 is subject to Phosphoserine.

It localises to the nucleus. This Schizosaccharomyces pombe (strain 972 / ATCC 24843) (Fission yeast) protein is HMG box-containing protein C10F6.08c.